Here is a 1342-residue protein sequence, read N- to C-terminus: DNA-directed RNA polymerase subunit beta (1342 aa).

N6-acetyllysine occurs at positions 1022 and 1200.

This sequence belongs to the RNA polymerase beta chain family. As to quaternary structure, the RNAP catalytic core consists of 2 alpha, 1 beta, 1 beta' and 1 omega subunit. When a sigma factor is associated with the core the holoenzyme is formed, which can initiate transcription.

The enzyme catalyses RNA(n) + a ribonucleoside 5'-triphosphate = RNA(n+1) + diphosphate. DNA-dependent RNA polymerase catalyzes the transcription of DNA into RNA using the four ribonucleoside triphosphates as substrates. In Escherichia coli O6:K15:H31 (strain 536 / UPEC), this protein is DNA-directed RNA polymerase subunit beta.